Consider the following 509-residue polypeptide: ATP synthase subunit alpha (509 aa).

Residue 169–176 (GDRQTGKT) participates in ATP binding.

This sequence belongs to the ATPase alpha/beta chains family. As to quaternary structure, F-type ATPases have 2 components, CF(1) - the catalytic core - and CF(0) - the membrane proton channel. CF(1) has five subunits: alpha(3), beta(3), gamma(1), delta(1), epsilon(1). CF(0) has three main subunits: a(1), b(2) and c(9-12). The alpha and beta chains form an alternating ring which encloses part of the gamma chain. CF(1) is attached to CF(0) by a central stalk formed by the gamma and epsilon chains, while a peripheral stalk is formed by the delta and b chains.

The protein localises to the cell inner membrane. It carries out the reaction ATP + H2O + 4 H(+)(in) = ADP + phosphate + 5 H(+)(out). In terms of biological role, produces ATP from ADP in the presence of a proton gradient across the membrane. The alpha chain is a regulatory subunit. The chain is ATP synthase subunit alpha from Xanthobacter autotrophicus (strain ATCC BAA-1158 / Py2).